The sequence spans 83 residues: Cytochrome b559 subunit alpha (83 aa).

Residues 21–35 (VIHSITIPSLFIAGW) traverse the membrane as a helical segment. Residue H23 coordinates heme.

Belongs to the PsbE/PsbF family. Heterodimer of an alpha subunit and a beta subunit. PSII is composed of 1 copy each of membrane proteins PsbA, PsbB, PsbC, PsbD, PsbE, PsbF, PsbH, PsbI, PsbJ, PsbK, PsbL, PsbM, PsbT, PsbX, PsbY, PsbZ, Psb30/Ycf12, at least 3 peripheral proteins of the oxygen-evolving complex and a large number of cofactors. It forms dimeric complexes. Heme b serves as cofactor.

It localises to the plastid. It is found in the chloroplast thylakoid membrane. This b-type cytochrome is tightly associated with the reaction center of photosystem II (PSII). PSII is a light-driven water:plastoquinone oxidoreductase that uses light energy to abstract electrons from H(2)O, generating O(2) and a proton gradient subsequently used for ATP formation. It consists of a core antenna complex that captures photons, and an electron transfer chain that converts photonic excitation into a charge separation. This is Cytochrome b559 subunit alpha from Huperzia lucidula (Shining clubmoss).